Reading from the N-terminus, the 314-residue chain is Acetylglutamate kinase (314 aa).

Substrate contacts are provided by residues 76–77, Arg98, and Asn199; that span reads GG.

This sequence belongs to the acetylglutamate kinase family. ArgB subfamily.

The protein localises to the cytoplasm. The catalysed reaction is N-acetyl-L-glutamate + ATP = N-acetyl-L-glutamyl 5-phosphate + ADP. The protein operates within amino-acid biosynthesis; L-arginine biosynthesis; N(2)-acetyl-L-ornithine from L-glutamate: step 2/4. Functionally, catalyzes the ATP-dependent phosphorylation of N-acetyl-L-glutamate. The protein is Acetylglutamate kinase of Bifidobacterium longum (strain DJO10A).